A 152-amino-acid polypeptide reads, in one-letter code: Transcriptional regulator MraZ (152 aa).

SpoVT-AbrB domains lie at 7–54 (INSI…TMDE) and 83–126 (ASEM…SQEA).

The protein belongs to the MraZ family. In terms of assembly, forms oligomers.

It is found in the cytoplasm. The protein localises to the nucleoid. The protein is Transcriptional regulator MraZ of Hydrogenovibrio crunogenus (strain DSM 25203 / XCL-2) (Thiomicrospira crunogena).